The sequence spans 684 residues: MKKKLIYAAVVSALLAGCGGSDDNKGDTSSYLDYLLTGSNAVGPSALAARAWDGTLKFSTETADLSNPVSAMSTLDGWSTTQAIQIVPVTSSGITVQAPTTAEFGASVAPLYLLEVTFDSTALRPSGVKKVLTYGVDFVVAASAWQAEPGSAQAVEPLPCLANDSGHRTAERQSRRCLKAGSDYGNYKNNAGSNAQEQTINGLIALQEGLFKAATGIATDHVIFSDWFGTQSGADVLVAVKGAAASVLKADPVTLDAAKLWKQDAWEHQPARHLYPGRDRPTCLPDPAGCRAVPAAEQKDAIATAFGPVLRSTRLLKRPRSIPVPSSCLTSSPHRRPQVPGARPRPSPGTVPSQPVRHRQCAEGVTRSDRRAGGGGRGSGPAGDADCRSDPPERAAGRGEQADWGDAHLRRQAAGRRAEHWSLQPAADAGRGAIRADACLRQGCPQHHHGCHHLSARRDLGQRERLRPGAGPDLEDLCRHAGGQEGGAGGDRSSAARRAWLRLSGSMDTVTTSDNPTPYLNLSYLTVARDNLKQSVAICWACVWRLAWPTPRAIGTAGSLKVHFLGHSLGASRVPTCCGRQPDHRQRASGCPVQVRYRWPGHAGSHSAAAAELADFGPTIKMGVLTSGSAELKAGFTAYAPNCTDGGAYLLRQRVPAEPGRGHSATAATRCRVQLCGPVGAGFG.

A signal peptide spans M1–A48. 2 disordered regions span residues S321–G405 and Q462–S493. Residues A385–G405 are compositionally biased toward basic and acidic residues. The Nucleophile role is filled by S568.

Belongs to the AB hydrolase superfamily. Lipase family. In terms of assembly, monomer.

Its subcellular location is the secreted. The enzyme catalyses a triacylglycerol + H2O = a diacylglycerol + a fatty acid + H(+). In terms of biological role, the optimum chain lengths for the acyl moiety is C6 for ester hydrolysis and C6 and C8 for triacylglycerol hydrolysis. This Aeromonas hydrophila protein is Extracellular lipase.